A 178-amino-acid chain; its full sequence is Bifunctional protein PyrR (178 aa).

The PRPP-binding motif lies at isoleucine 99–threonine 111.

The protein belongs to the purine/pyrimidine phosphoribosyltransferase family. PyrR subfamily. In terms of assembly, homodimer and homohexamer; in equilibrium.

The enzyme catalyses UMP + diphosphate = 5-phospho-alpha-D-ribose 1-diphosphate + uracil. Functionally, regulates transcriptional attenuation of the pyrimidine nucleotide (pyr) operon by binding in a uridine-dependent manner to specific sites on pyr mRNA. This disrupts an antiterminator hairpin in the RNA and favors formation of a downstream transcription terminator, leading to a reduced expression of downstream genes. In terms of biological role, also displays a weak uracil phosphoribosyltransferase activity which is not physiologically significant. The chain is Bifunctional protein PyrR from Clostridium novyi (strain NT).